A 145-amino-acid polypeptide reads, in one-letter code: MIKYFDKNNEVFNLIKDLTGRLNVEILEINIFRNKNNGKIQIVLYSKNFSLDIDFLTDLHKMILLILEANLKYGFTLELSTPGIDRKIKSDREFKIFEGKKIKLMLDNEFEEGFILESKPKSFIFKTDSKEVNVFYSDVKKARLV.

The protein belongs to the RimP family.

Its subcellular location is the cytoplasm. Required for maturation of 30S ribosomal subunits. The sequence is that of Ribosome maturation factor RimP from Borreliella burgdorferi (strain ATCC 35210 / DSM 4680 / CIP 102532 / B31) (Borrelia burgdorferi).